Reading from the N-terminus, the 383-residue chain is Acetylornithine deacetylase (383 aa).

His80 serves as a coordination point for Zn(2+). Residue Asp82 is part of the active site. A Zn(2+)-binding site is contributed by Asp112. Glu144 is an active-site residue. Residues Glu145, Glu169, and His355 each coordinate Zn(2+).

The protein belongs to the peptidase M20A family. ArgE subfamily. In terms of assembly, homodimer. Zn(2+) is required as a cofactor. Co(2+) serves as cofactor. It depends on glutathione as a cofactor.

Its subcellular location is the cytoplasm. The enzyme catalyses N(2)-acetyl-L-ornithine + H2O = L-ornithine + acetate. It functions in the pathway amino-acid biosynthesis; L-arginine biosynthesis; L-ornithine from N(2)-acetyl-L-ornithine (linear): step 1/1. In terms of biological role, catalyzes the hydrolysis of the amide bond of N(2)-acetylated L-amino acids. Cleaves the acetyl group from N-acetyl-L-ornithine to form L-ornithine, an intermediate in L-arginine biosynthesis pathway, and a branchpoint in the synthesis of polyamines. The polypeptide is Acetylornithine deacetylase (Shigella dysenteriae serotype 1 (strain Sd197)).